The primary structure comprises 340 residues: HTH-type transcriptional repressor PurR (340 aa).

Residues 2–56 (ATIKDVAKLVGVSTTTVSHVINKTRFVAEDTTKAVWEAIASLNYSPSAVARSLKV) form the HTH lacI-type domain. Positions 4 to 23 (IKDVAKLVGVSTTTVSHVIN) form a DNA-binding region, H-T-H motif. The DNA-binding element occupies 48 to 56 (SAVARSLKV). Hypoxanthine contacts are provided by Tyr-73, Lys-188, Thr-190, Phe-219, and Asp-273.

Homodimer.

Its pathway is purine metabolism; purine nucleotide biosynthesis [regulation]. Its function is as follows. Is the main repressor of the genes involved in the de novo synthesis of purine nucleotides, regulating purB, purC, purEK, purF, purHD, purL, purMN and guaBA expression. PurR is allosterically activated to bind its cognate DNA by binding the purine corepressors, hypoxanthine or guanine, thereby effecting transcription repression. This Glaesserella parasuis serovar 5 (strain SH0165) (Haemophilus parasuis) protein is HTH-type transcriptional repressor PurR.